The primary structure comprises 213 residues: Nicotinamidase (213 aa).

The active-site Proton acceptor is the Asp10. The Zn(2+) site is built by Asp52, His54, and His86. Residue Lys111 is part of the active site. Cys156 acts as the Nucleophile in catalysis.

The protein belongs to the isochorismatase family.

It carries out the reaction nicotinamide + H2O = nicotinate + NH4(+). The enzyme catalyses pyrazinamide + H2O = pyrazine-2-carboxylate + NH4(+). The protein operates within cofactor biosynthesis; nicotinate biosynthesis; nicotinate from nicotinamide: step 1/1. Catalyzes the deamidation of nicotinamide (NAM) into nicotinate. Likely functions in the cyclical salvage pathway for production of NAD from nicotinamide. In terms of biological role, is also able to hydrolyze the first-line antituberculous drug pyrazinamide (PZA) into pyrazinoic acid in vitro, but this reaction is not considered to be physiologically relevant. This chain is Nicotinamidase, found in Escherichia coli (strain K12).